We begin with the raw amino-acid sequence, 127 residues long: Protein FAM229A (127 aa).

Positions 1-96 are disordered; the sequence is MLPSSTPGPG…ATEHNPVRPL (96 aa). Residues 24–39 show a composition bias toward low complexity; it reads RSPAARAPAAASSLGP.

The protein belongs to the FAM229 family.

In Homo sapiens (Human), this protein is Protein FAM229A (FAM229A).